We begin with the raw amino-acid sequence, 137 residues long: Large ribosomal subunit protein uL16 (137 aa).

This sequence belongs to the universal ribosomal protein uL16 family. In terms of assembly, part of the 50S ribosomal subunit.

Functionally, binds 23S rRNA and is also seen to make contacts with the A and possibly P site tRNAs. In Nitratidesulfovibrio vulgaris (strain DSM 19637 / Miyazaki F) (Desulfovibrio vulgaris), this protein is Large ribosomal subunit protein uL16.